We begin with the raw amino-acid sequence, 324 residues long: Probable metal transport system membrane protein CPn_0346/CP_0414/CPj0346/CpB0353 (324 aa).

Transmembrane regions (helical) follow at residues 1–21 (MALG…SVFF), 39–59 (IQII…TFLV), 64–84 (AMYA…VCLF), 94–114 (GTLT…IYFI), 125–145 (STAL…VFMT), 165–185 (EDIF…IFAF), 201–221 (LGIP…ACLV), 226–246 (AVGV…AKVI), 252–272 (SLMA…PASS), and 286–306 (SGIS…ISYF).

This sequence belongs to the ABC-3 integral membrane protein family.

The protein resides in the cell inner membrane. Functionally, part of an ATP-driven transport system CPn_0346/CPn_0347/CPn_0348/CPn_0349 for a metal. This Chlamydia pneumoniae (Chlamydophila pneumoniae) protein is Probable metal transport system membrane protein CPn_0346/CP_0414/CPj0346/CpB0353.